The sequence spans 166 residues: HTH-type transcriptional regulator PecS (166 aa).

In terms of domain architecture, HTH marR-type spans proline 25 to lysine 160.

It is found in the cytoplasm. With respect to regulation, the presence of PecM is required to ensure the full regulation of the pecS-pecM intergenic region by PecS. In terms of biological role, negatively regulates the expression of genes encoding pectinase and cellulase, which play a major role in virulence, and the expression of the blue pigment indigoidine, which is implicated in pathogenicity and protection from oxidative stress. Represses the expression of genes involved in indigoidine biosynthesis by binding to indA and indC promoter regions. Also binds to promoter sites in the pecS-pecM intergenic region and negatively autoregulates its expression as well as that of pecM. The chain is HTH-type transcriptional regulator PecS from Dickeya dadantii (strain 3937) (Erwinia chrysanthemi (strain 3937)).